We begin with the raw amino-acid sequence, 323 residues long: uncharacterized protein (323 aa).

The 80-residue stretch at 16–95 (QRIDQFCLKI…DKLKIIFEDE (80 aa)) folds into the S4 RNA-binding domain. The active site involves Asp148.

It belongs to the pseudouridine synthase RluA family.

It catalyses the reaction a uridine in RNA = a pseudouridine in RNA. This is an uncharacterized protein from Mycoplasma genitalium (strain ATCC 33530 / DSM 19775 / NCTC 10195 / G37) (Mycoplasmoides genitalium).